The sequence spans 379 residues: Glutamate 5-kinase (379 aa).

Lys15 contributes to the ATP binding site. Substrate is bound by residues Ser59, Asp146, and Asn158. 178–179 serves as a coordination point for ATP; the sequence is TD. One can recognise a PUA domain in the interval 285–363; the sequence is RGAVTVDVGA…SEFERLLGYS (79 aa).

This sequence belongs to the glutamate 5-kinase family.

The protein localises to the cytoplasm. It carries out the reaction L-glutamate + ATP = L-glutamyl 5-phosphate + ADP. It participates in amino-acid biosynthesis; L-proline biosynthesis; L-glutamate 5-semialdehyde from L-glutamate: step 1/2. Functionally, catalyzes the transfer of a phosphate group to glutamate to form L-glutamate 5-phosphate. The chain is Glutamate 5-kinase from Paracidovorax citrulli (strain AAC00-1) (Acidovorax citrulli).